The primary structure comprises 388 residues: Adenosine deaminase-like protein (388 aa).

The segment covering 1–13 (MPNNSKHKKKQQR) has biased composition (basic residues). The disordered stretch occupies residues 1-34 (MPNNSKHKKKQQRRQQEAQKKSRAKQIETDKKND). A compositionally biased stretch (basic and acidic residues) spans 14 to 34 (RQQEAQKKSRAKQIETDKKND). Zn(2+)-binding residues include histidine 65 and histidine 67. Residues histidine 67, histidine 114, 146 to 149 (TSPK), aspartate 186, and glycine 218 contribute to the N(6)-methyl-AMP site. Histidine 245 contacts Zn(2+). N(6)-methyl-AMP is bound by residues glutamate 248, aspartate 326, and aspartate 327. Catalysis depends on glutamate 248, which acts as the Proton donor. Aspartate 326 is a binding site for Zn(2+).

It belongs to the metallo-dependent hydrolases superfamily. Adenosine and AMP deaminases family. In terms of assembly, monomer. Zn(2+) is required as a cofactor.

It carries out the reaction N(6)-methyl-AMP + H2O + H(+) = IMP + methylamine. Catalyzes the hydrolysis of the free cytosolic methylated adenosine nucleotide N(6)-methyl-AMP (N6-mAMP) to produce inositol monophosphate (IMP) and methylamine. Is required for the catabolism of cytosolic N6-mAMP, which is derived from the degradation of mRNA containing N6-methylated adenine (m6A). In Caenorhabditis elegans, this protein is Adenosine deaminase-like protein.